Reading from the N-terminus, the 496-residue chain is MTMDPTKFRPSSSHDTTVTTTNAGAPVWNDNEALTVGPRGPILLEDYHLIEKVAHFARERIPERVVHARGASAKGFFECTHDVTSLTCADFLRAPGVRTPVIVRFSTVIHERGSPETIRDPRGFAVKFYTREGNWDLLGNNFPVFFIRDGIKFPDVIHAFKPNPRSHVQEYWRVFDFLSHLPESLHTFFFLFDDVGVPSDYRHMEGFGVNTYTFVSAAGKAQYVKFHWKPTCGVRCILTDEEAALVGGRNHSHATQDLYDSIAAGSFPEWTLYVQVMDPDTEEQYDFDPLDDTKTWPEDLLPLRPVGRLVLDRNVDNFFNENEQLAFGPGLVVPGIYYSDDKMLQCRVFAYADTQRYRLGPNYLMLPVNAPRCAHHNNHYDGAMNFMHRDEEVDYYPSRHAPLRQAAPPTPLPPRPVAGRREKATIRKPNDFKQPGERYRSWDADRQDRFVRRFADSLGHPKVSQELRSIWIDLLAKCDASLGMKIATRLNMKANM.

The tract at residues 1–25 is disordered; sequence MTMDPTKFRPSSSHDTTVTTTNAGA. The span at 9 to 23 shows a compositional bias: polar residues; sequence RPSSSHDTTVTTTNA. Catalysis depends on residues histidine 67 and asparagine 140. Heme is bound at residue tyrosine 351. The disordered stretch occupies residues 402–422; sequence PLRQAAPPTPLPPRPVAGRRE.

It belongs to the catalase family. In terms of assembly, homotetramer. Heme is required as a cofactor. As to expression, leaf mesophyll cells, pericarp, seedling roots and the coleoptile.

Its subcellular location is the mitochondrion. The catalysed reaction is 2 H2O2 = O2 + 2 H2O. Its function is as follows. Occurs in almost all aerobically respiring organisms and serves to protect cells from the toxic effects of hydrogen peroxide. Its levels are highest in the light period and are lowest in the dark period, hence it may be important for scavenging hydrogen peroxide at night, rather than during the day. This chain is Catalase isozyme 3 (CAT3), found in Zea mays (Maize).